Reading from the N-terminus, the 857-residue chain is DNA mismatch repair protein MutS (857 aa).

An ATP-binding site is contributed by 621 to 628; that stretch reads GPNMGGKS.

The protein belongs to the DNA mismatch repair MutS family.

This protein is involved in the repair of mismatches in DNA. It is possible that it carries out the mismatch recognition step. This protein has a weak ATPase activity. The protein is DNA mismatch repair protein MutS of Francisella tularensis subsp. tularensis (strain SCHU S4 / Schu 4).